The primary structure comprises 468 residues: MGRRSGGRKLPFFASNASTSSSTKRTRSARRLPSLTRPRASSSPSPASPSPPPPSASHPAPPSPPLAVSPAGAGKVGKKKAGARLWMRLDRWGVSETLHLDKGSIIRRAGLPPRDLRILGPVFSDSSSILAREKAMVINLEFIRAIVTADEILLLDPLTIDVIPFVEQLTHHLPLKNLVCGNGQPGGDDHGEKHDDSHGDQVPRLNEATGAEHELPFEFQVLELALETVCSSFDVNVSGLERRATPVLEELTKNVSTRNLDRVRTLKSDLTRLLAHVQKVRDEIEHLLDDNEDMAHLYLTRKQLQNQQVEALISSAASNSIVPGGTSLSRLNNSFRRSVSIATSMHLDNDVEDLEMLLEAYFMQLDGIRNRILSVREYIDDTEDYVNIQLDNQRNELIQLQLTLTIASFGIAVNTFIAGAFAMNIQSKLYSIDDGSFFWPFVGGTSSGCFMICIVLLWYARWKKLLGP.

Disordered regions lie at residues 1 to 76 (MGRR…AGKV) and 183 to 204 (GQPGGDDHGEKHDDSHGDQVPR). Low complexity-rich tracts occupy residues 14–23 (ASNASTSSST) and 31–45 (RLPSLTRPRASSSPS). Residues 46 to 67 (PASPSPPPPSASHPAPPSPPLA) are compositionally biased toward pro residues. Residues 187-201 (GDDHGEKHDDSHGDQ) show a composition bias toward basic and acidic residues. The next 2 helical transmembrane spans lie at 402 to 422 (LTLTIASFGIAVNTFIAGAFA) and 437 to 457 (FFWPFVGGTSSGCFMICIVLL).

Belongs to the CorA metal ion transporter (MIT) (TC 1.A.35.5) family. Interacts with CYCB2-2.

The protein localises to the membrane. In terms of biological role, putative magnesium transporter. The polypeptide is Putative magnesium transporter MRS2-G (MRS2-G) (Oryza sativa subsp. japonica (Rice)).